The sequence spans 203 residues: Small ribosomal subunit protein uS3 (203 aa).

Residues 39 to 113 (IREIIRRNFL…NHVLNAKNIA (75 aa)) enclose the KH type-2 domain.

This sequence belongs to the universal ribosomal protein uS3 family. As to quaternary structure, part of the 30S ribosomal subunit. Forms a tight complex with proteins S10 and S14.

Its function is as follows. Binds the lower part of the 30S subunit head. Binds mRNA in the 70S ribosome, positioning it for translation. In Carsonella ruddii, this protein is Small ribosomal subunit protein uS3.